The following is a 72-amino-acid chain: Putative D-serine transporter DsdX-like protein (72 aa).

The polypeptide is Putative D-serine transporter DsdX-like protein (dsdX) (Escherichia coli O157:H7).